Consider the following 353-residue polypeptide: Stearoyl-CoA desaturase 4 (353 aa).

The interval M1–P42 is disordered. Residues M1–V66 lie on the Cytoplasmic side of the membrane. A compositionally biased stretch (polar residues) spans E8–I18. Basic and acidic residues predominate over residues P21–P42. Residues W67 to V87 traverse the membrane as a helical segment. N69 contacts substrate. Over P88 to K91 the chain is Lumenal. The chain crosses the membrane as a helical span at residues V92 to G112. Over A113–Y211 the chain is Cytoplasmic. The Fe cation site is built by H114 and H119. A Histidine box-1 motif is present at residues H114 to H119. Substrate contacts are provided by N142, R149, and D150. Fe cation is bound by residues H151, H154, and H155. The Histidine box-2 signature appears at H151–H155. The substrate site is built by R182 and K183. A helical transmembrane segment spans residues Y212–L231. At W232–T235 the chain is on the lumenal side. Residues F236 to L257 traverse the membrane as a helical segment. W256 contributes to the substrate binding site. At V258 to S353 the chain is on the cytoplasmic side. Residues H263, H292, H295, and H296 each contribute to the Fe cation site. The Histidine box-3 signature appears at H292–H296.

Belongs to the fatty acid desaturase type 1 family. It depends on Fe(2+) as a cofactor. Detected in heart, but not in brain, liver, skin or adipose tissue.

It localises to the endoplasmic reticulum membrane. The protein localises to the microsome membrane. It catalyses the reaction octadecanoyl-CoA + 2 Fe(II)-[cytochrome b5] + O2 + 2 H(+) = (9Z)-octadecenoyl-CoA + 2 Fe(III)-[cytochrome b5] + 2 H2O. The catalysed reaction is hexadecanoyl-CoA + 2 Fe(II)-[cytochrome b5] + O2 + 2 H(+) = (9Z)-hexadecenoyl-CoA + 2 Fe(III)-[cytochrome b5] + 2 H2O. Functionally, stearoyl-CoA desaturase that utilizes O(2) and electrons from reduced cytochrome b5 to introduce the first double bond into saturated fatty acyl-CoA substrates. Catalyzes the insertion of a cis double bond at the delta-9 position into fatty acyl-CoA substrates including palmitoyl-CoA and stearoyl-CoA. Required for the biosynthesis of membrane phospholipids, cholesterol esters and triglycerides. The protein is Stearoyl-CoA desaturase 4 of Mus musculus (Mouse).